The primary structure comprises 314 residues: Aspartate carbamoyltransferase catalytic subunit (314 aa).

Carbamoyl phosphate-binding residues include Arg55 and Thr56. Lys83 lines the L-aspartate pocket. Carbamoyl phosphate-binding residues include Arg105, His139, and Gln142. Positions 172 and 226 each coordinate L-aspartate. Gly267 and Pro268 together coordinate carbamoyl phosphate.

It belongs to the aspartate/ornithine carbamoyltransferase superfamily. ATCase family. As to quaternary structure, heterododecamer (2C3:3R2) of six catalytic PyrB chains organized as two trimers (C3), and six regulatory PyrI chains organized as three dimers (R2).

It carries out the reaction carbamoyl phosphate + L-aspartate = N-carbamoyl-L-aspartate + phosphate + H(+). Its pathway is pyrimidine metabolism; UMP biosynthesis via de novo pathway; (S)-dihydroorotate from bicarbonate: step 2/3. Its function is as follows. Catalyzes the condensation of carbamoyl phosphate and aspartate to form carbamoyl aspartate and inorganic phosphate, the committed step in the de novo pyrimidine nucleotide biosynthesis pathway. In Rhodococcus opacus (strain B4), this protein is Aspartate carbamoyltransferase catalytic subunit.